The sequence spans 138 residues: ATP synthase epsilon chain (138 aa).

This sequence belongs to the ATPase epsilon chain family. In terms of assembly, F-type ATPases have 2 components, CF(1) - the catalytic core - and CF(0) - the membrane proton channel. CF(1) has five subunits: alpha(3), beta(3), gamma(1), delta(1), epsilon(1). CF(0) has three main subunits: a, b and c.

The protein localises to the cell inner membrane. Functionally, produces ATP from ADP in the presence of a proton gradient across the membrane. The protein is ATP synthase epsilon chain of Vesicomyosocius okutanii subsp. Calyptogena okutanii (strain HA).